The primary structure comprises 188 residues: Probable DNA-directed RNA polymerase subunit delta (188 aa).

An HTH HARE-type domain is found at 14 to 83 (LSMIEVARAI…GENKWGLRSW (70 aa)). A disordered region spans residues 119 to 188 (EDAIDYSADD…EDEEDEDEEE (70 aa)).

It belongs to the RpoE family. In terms of assembly, RNAP is composed of a core of 2 alpha, a beta and a beta' subunits. The core is associated with a delta subunit and one of several sigma factors.

In terms of biological role, participates in both the initiation and recycling phases of transcription. In the presence of the delta subunit, RNAP displays an increased specificity of transcription, a decreased affinity for nucleic acids, and an increased efficiency of RNA synthesis because of enhanced recycling. The sequence is that of Probable DNA-directed RNA polymerase subunit delta from Streptococcus equi subsp. zooepidemicus (strain H70).